The sequence spans 193 residues: p53 apoptosis effector related to PMP-22 (193 aa).

Transmembrane regions (helical) follow at residues Arg-12–Gly-32, Ala-79–Leu-99, Val-110–Pro-130, and Trp-151–Cys-171.

It belongs to the TMEM47 family. As to quaternary structure, (Microbial infection) Interacts with S.typhimurium sipA and sctB1/sipC. As to expression, expressed in skin, heart, placental, liver, pancreas, keratinocytes and dermal fibroblasts. May translocate to the intestinal apical epithelial cell surface via sipA and sctB1/sipC-promoted exocytic translocation following infection by S. Typhimurium.

Its subcellular location is the cell junction. It localises to the desmosome. The protein resides in the cell membrane. The protein localises to the cytoplasm. Its function is as follows. Component of intercellular desmosome junctions. Plays a role in stratified epithelial integrity and cell-cell adhesion by promoting desmosome assembly. Thereby plays a role in barrier function of the skin against infection. Plays a role in mammary epithelial tissue homeostasis and remodeling during and after pregnancy, potentially via its involvement in desmosome cell-cell junctions. Required for tooth enamel development via facilitating desmosome-mediated ameloblast adhesion to the stratum intermedium during the transitional stage of amelogenesis. May also play a role in downstream transcriptional regulation of other genes involved in amelogenesis such as AMBN, ENAM, MMP20 and KLK4. Plays a role as an effector in the TP53-dependent apoptotic pathway. Positively regulates apoptosis in T-helper 17 (Th17) cell populations via caspase-dependent signaling. Promotes neutrophil transepithelial migration in response to chemoattractants such as hepoxilin A3 (HXA3), N-Formylmethionyl-leucyl-phenylalanine (fMLP) and CXCL8/IL-8. Required for neutrophil transepithelial migration in response to S.typhimurium infection. May act as a positive regulator of endothelial cell apoptosis in response to blood flow-derived shear stress. This is p53 apoptosis effector related to PMP-22 from Homo sapiens (Human).